The following is a 120-amino-acid chain: NAD(P)H-quinone oxidoreductase subunit 3, chloroplastic (120 aa).

The next 3 helical transmembrane spans lie at 9 to 29 (IFWAFLIISSVIPILAFLISG), 64 to 84 (MFALVFVVFDVETVFLYPWAM), and 88 to 108 (VLGVSVFIEALIFVLILIVGL).

The protein belongs to the complex I subunit 3 family. NDH is composed of at least 16 different subunits, 5 of which are encoded in the nucleus.

The protein resides in the plastid. It localises to the chloroplast thylakoid membrane. The enzyme catalyses a plastoquinone + NADH + (n+1) H(+)(in) = a plastoquinol + NAD(+) + n H(+)(out). The catalysed reaction is a plastoquinone + NADPH + (n+1) H(+)(in) = a plastoquinol + NADP(+) + n H(+)(out). Functionally, NDH shuttles electrons from NAD(P)H:plastoquinone, via FMN and iron-sulfur (Fe-S) centers, to quinones in the photosynthetic chain and possibly in a chloroplast respiratory chain. The immediate electron acceptor for the enzyme in this species is believed to be plastoquinone. Couples the redox reaction to proton translocation, and thus conserves the redox energy in a proton gradient. This is NAD(P)H-quinone oxidoreductase subunit 3, chloroplastic from Populus alba (White poplar).